The following is a 508-amino-acid chain: Probable metalloreductase AIM14 (508 aa).

The next 8 helical transmembrane spans lie at 18 to 38, 70 to 90, 100 to 120, 137 to 157, 168 to 188, 198 to 218, 222 to 242, and 347 to 367; these read LPYG…LIVM, PLLL…VAYI, LSYV…NPIL, FVTV…SLDP, LFNF…FASV, SFYV…PIHA, VTVP…ISYI, and VAIV…KYLQ. One can recognise a Ferric oxidoreductase domain in the interval 97–214; sequence LGRLSYVLVI…LGQWAMVFLV (118 aa). The FAD-binding FR-type domain occupies 241 to 361; sequence YIYYSTTVNV…GGSGISFGLS (121 aa).

The protein belongs to the ferric reductase (FRE) family. AIM14 subfamily.

The protein resides in the membrane. In terms of biological role, probable cell surface metalloreductase. May be involved in iron or copper homeostasis. The polypeptide is Probable metalloreductase AIM14 (AIM14) (Kluyveromyces lactis (strain ATCC 8585 / CBS 2359 / DSM 70799 / NBRC 1267 / NRRL Y-1140 / WM37) (Yeast)).